Reading from the N-terminus, the 342-residue chain is MKIAVLLSGGVDSSYSAYSLKEQGHELVGVYLKLHASEKKHDLYIKNAQKACEFLGIPLEVLDFQKDFKSTVYDEFISAYEEGQTPNPCTLCNPLMKFGLALDHALKLGCEKIATGHYARVKEIDKVSYIQEALDKTKDQSYFLYALEHEVIAKLVFPLGDLLKKDIKPLALNAMPFLGTLETYKESQEICFVEKSYIDTLKKHVEVEKEGVVKNLQGEIIGTHKGYMQYTIGKRKGFSIKGALEPHFVVGIDAKKNELIVGKKEDLATHSLKAKNKSLMKDFKSGEYFIKARYRSVPTKAFVSLKDEMIEVGFKESFYGVAKGQALVVYKDDILLGGGVIV.

ATP contacts are provided by residues 6–13 (LLSGGVDS) and Leu32. Cys92 functions as the Nucleophile in the catalytic mechanism. Cys92 and Cys191 form a disulfide bridge. Position 116 (Gly116) interacts with ATP. The tract at residues 138-140 (KDQ) is interaction with tRNA. The Cysteine persulfide intermediate role is filled by Cys191. The segment at 293-294 (RY) is interaction with tRNA.

The protein belongs to the MnmA/TRMU family.

It is found in the cytoplasm. It carries out the reaction S-sulfanyl-L-cysteinyl-[protein] + uridine(34) in tRNA + AH2 + ATP = 2-thiouridine(34) in tRNA + L-cysteinyl-[protein] + A + AMP + diphosphate + H(+). Catalyzes the 2-thiolation of uridine at the wobble position (U34) of tRNA, leading to the formation of s(2)U34. The protein is tRNA-specific 2-thiouridylase MnmA of Helicobacter pylori (strain G27).